A 743-amino-acid polypeptide reads, in one-letter code: Inhibitor of nuclear factor kappa-B kinase subunit alpha (743 aa).

In terms of domain architecture, Protein kinase spans 15-300; that stretch reads WDMKDRLGTG…IDCGRPRCFM (286 aa). ATP is bound by residues 21–29 and Lys-44; that span reads LGTGGFGNV. The active-site Proton acceptor is Asp-144. Residues 453–474 form a leucine-zipper region; the sequence is LLRFNTNLTKMKNTMVSASQQL. An NEMO-binding region spans residues 736–741; the sequence is MDFSWL.

Belongs to the protein kinase superfamily. Ser/Thr protein kinase family. I-kappa-B kinase subfamily.

It is found in the cytoplasm. The protein localises to the nucleus. It carries out the reaction L-seryl-[I-kappa-B protein] + ATP = O-phospho-L-seryl-[I-kappa-B protein] + ADP + H(+). Its activity is regulated as follows. Activated when phosphorylated and inactivated when dephosphorylated. Phosphorylates inhibitors of NF-kappa-B thus leading to the dissociation of the inhibitor/NF-kappa-B complex and ultimately the degradation of the inhibitor. Phosphorylates 'Ser-10' of histone H3 at NF-kappa-B-regulated promoters during inflammatory responses triggered by cytokines. The chain is Inhibitor of nuclear factor kappa-B kinase subunit alpha (chuk) from Xenopus laevis (African clawed frog).